Reading from the N-terminus, the 519-residue chain is Cytochrome P450 CYP99A1 (519 aa).

Residue cysteine 453 participates in heme binding.

The protein belongs to the cytochrome P450 family. Heme serves as cofactor.

The protein localises to the membrane. The protein is Cytochrome P450 CYP99A1 (CYP99A1) of Sorghum bicolor (Sorghum).